The following is a 226-amino-acid chain: UPF0502 protein Daci_5373 (226 aa).

It belongs to the UPF0502 family.

In Delftia acidovorans (strain DSM 14801 / SPH-1), this protein is UPF0502 protein Daci_5373.